We begin with the raw amino-acid sequence, 257 residues long: Thioredoxin-dependent peroxide reductase, mitochondrial (257 aa).

The N-terminal 62 residues, 1–62, are a transit peptide targeting the mitochondrion; it reads MAAAAGRLLW…FAFSTSSSFH (62 aa). The Thioredoxin domain maps to 64–222; it reads PAVTQHAPHF…PLRLVKAFQF (159 aa). Lysine 84 bears the N6-succinyllysine mark. Lysine 92 carries the post-translational modification N6-acetyllysine; alternate. Lysine 92 bears the N6-succinyllysine; alternate mark. Residue cysteine 109 is the Cysteine sulfenic acid (-SOH) intermediate of the active site. Residue threonine 147 is modified to Phosphothreonine.

Belongs to the peroxiredoxin family. AhpC/Prx1 subfamily. Homodimer; disulfide-linked, upon oxidation. 6 homodimers assemble to form a ring-like dodecamer. Interacts with NEK6. Interacts with LRRK2. Interacts with MAP3K13. Interacts with RPS6KC1 (via PX domain). In terms of processing, phosphorylated by LRRK2; phosphorylation reduces perodixase activity. The enzyme can be inactivated by further oxidation of the cysteine sulfenic acid (C(P)-SOH) to sulphinic acid (C(P)-SO2H) and sulphonic acid (C(P)-SO3H) instead of its condensation to a disulfide bond. Post-translationally, S-palmitoylated. In terms of tissue distribution, ubiquitous.

The protein localises to the mitochondrion. It is found in the cytoplasm. The protein resides in the early endosome. The enzyme catalyses a hydroperoxide + [thioredoxin]-dithiol = an alcohol + [thioredoxin]-disulfide + H2O. Functionally, thiol-specific peroxidase that catalyzes the reduction of hydrogen peroxide and organic hydroperoxides to water and alcohols, respectively. Plays a role in cell protection against oxidative stress by detoxifying peroxides. Acts synergistically with MAP3K13 to regulate the activation of NF-kappa-B in the cytosol. Required for the maintenance of physical strength. This is Thioredoxin-dependent peroxide reductase, mitochondrial (Prdx3) from Rattus norvegicus (Rat).